The primary structure comprises 1770 residues: MESQQLHQNPHSLHGSAYASVTSKEVPSNQDPLAVSASNLPEFDRDSTKVNSQQETTPGTSAVPENHHHVSPQPASVPPPQNGQYQQHGMMTPNKAMASNWAHYQQPSMMTCSHYQTSPAYYQPDPHYPLPQYIPPLSTSSPDPIDLKNQHSEIPQAKTKVGNNVLPPHTLTSEENFSTWVKFYIRFLKNSNLGDIIPNDQGEIKRQMTYEEHAYIYNTFQAFAPFHLLPTWVKQILEINYADILTVLCKSVSKMQTNNQELKDWIALANLEYDGSTSADTFEITVSTIIQRLKENNINVSDRLACQLILKGLSGDFKYLRNQYRTKTNMKLSQLFAEIQLIYDENKIMNLNKPSQYKQHSEYKNVSRTSPNTTNTKVTTRNYHRTNSSKPRAAKAHNIATSSKFSRVNNDHINESTVSSQYLSDDDELSLGQQQKESKPTHTIDSNDELPDHLLIDSGASQTLVRSAHYLHHATPNSEINIVDAQKQDIPINAIGNLHFNFQNGTKTSIKALHTPNIAYDLLSLSELANQNITACFTRNTLERSDGTVLAPIVKHGDFYWLSKKYLIPSHISKLTINNVNKSKSVNKYPYPLIHRMLGHANFRSIQKSLKKNAVTYLKESDIEWSNASTYQCPDCLIGKSTKHRHVKGSRLKYQESYEPFQYLHTDIFGPVHHLPKSAPSYFISFTDEKTRFQWVYPLHDRREESILNVFTSILAFIKNQFNARVLVIQMDRGSEYTNKTLHKFFTNRGITACYTTTADSRAHGVAERLNRTLLNDCRTLLHCSGLPNHLWFSAVEFSTIIRNSLVSPKKRKSARQHAGLAGLDITTILPFGQPVIVNNHNPDSKIHPRGIPGYALHPSRNSYGYIIYLPSLKKTVDTTNYVILQNKQTKLDQFDYDTLTFDDDLNRLTAHNQSFIEQNETEQSYDQNTESDHDYQSEIEINSDPLVNDFSSQSINPLQLDKEPVQKVRAPKEVDADISEYNILPSTIRSRTPHIINKESTEMGGTVESDTTSPRHSSTFTARNQNRPGSTNEMIDLTSQDRVNYGLENIKTTRLGGTEEPYIQRNSDTNIKYRTTNSTPSIDDRSSNSESTTPIISIETKAVCDNTPSIDTDPPEYRSSDHATPNIMPDKSSKNVTADSILDDLPLPDLTHKSPTDTSDVSKDIPHIHSRQTNSSLGGMDDSNVLTTTKSKKRSLEDNETEIEVSRDTWNNKNMRSLEPPRSKKRINLIAAIKGVKSIKPVRTTLRYDEAITYNKDNKEKDRYVEAYHKEISQLLKMNTWDTNKYYDRNDIDPKKVINSMFIFNKKRDGTHKARFVARGDIQHPDTYDSDMQSNTVHHYALMTSLSIALDNDYYITQLDISSAYLYADIKEELYIRPPPHLGLNDKLLRLRKSLYGLKQSGANWYETIKSYLINCCDMQEVRGWSCVFKNSQVTICLFVDDMILFSKDLNANKKIITTLKKQYDTKIINLGESDNEIQYDILGLEIKYQRSKYMKLGMEKSLTEKLPKLNVPLNPKGKKLRAPGQPGHYIDQDELEIDEDEYKEKVHEMQKLIGLASYVGYKFRFDLLYYINTLAQHILFPSRQVLDMTYELIQFMWDTRDKQLIWHKNKPTKPDNKLVAISDASYGNQPYYKSQIGNIFLLNGKVIGGKSTKASLTCTSTTEAEIHAVSEAIPLLNNLSHLVQELNKKPIIKGLLTDSRSTISIIKSTNEEKFRNRFFGTKAMRLRDEVSGNNLYVYYIETKKNIADVMTKPLPIKTFKLLTNKWIH.

3 stretches are compositionally biased toward polar residues: residues 1–11 (MESQQLHQNPH), 19–39 (ASVTSKEVPSNQDPLAVSASN), and 49–60 (KVNSQQETTPGT). 2 disordered regions span residues 1–86 (MESQ…GQYQ) and 360–453 (HSEY…LPDH). An RNA-binding region spans residues 295 to 397 (ENNINVSDRL…SSKPRAAKAH (103 aa)). Over residues 369–381 (TSPNTTNTKVTTR) the composition is skewed to low complexity. Residues 399-408 (IATSSKFSRV) show a composition bias toward polar residues. Catalysis depends on aspartate 457, which acts as the For protease activity; shared with dimeric partner. The interval 579 to 636 (NVNKSKSVNKYPYPLIHRMLGHANFRSIQKSLKKNAVTYLKESDIEWSNASTYQCPDC) is integrase-type zinc finger-like. An Integrase catalytic domain is found at 656 to 831 (ESYEPFQYLH…AGLDITTILP (176 aa)). Aspartate 667 and aspartate 732 together coordinate Mg(2+). 4 disordered regions span residues 1004–1034 (MGGTVESDTTSPRHSSTFTARNQNRPGSTNE), 1059–1135 (TEEP…KSSK), 1146–1165 (LPLPDLTHKSPTDTSDVSKD), and 1170–1205 (HSRQTNSSLGGMDDSNVLTTTKSKKRSLEDNETEIE). Composition is skewed to polar residues over residues 1009-1034 (ESDTTSPRHSSTFTARNQNRPGSTNE) and 1065-1082 (QRNSDTNIKYRTTNSTPS). Positions 1151-1165 (LTHKSPTDTSDVSKD) are enriched in basic and acidic residues. A Bipartite nuclear localization signal motif is present at residues 1193 to 1227 (KKRSLEDNETEIEVSRDTWNNKNMRSLEPPRSKKR). Positions 1353-1491 (NDYYITQLDI…DILGLEIKYQ (139 aa)) constitute a Reverse transcriptase Ty1/copia-type domain. Residues aspartate 1361, aspartate 1442, aspartate 1443, aspartate 1625, glutamate 1667, and aspartate 1700 each coordinate Mg(2+). The RNase H Ty1/copia-type domain occupies 1625-1767 (DASYGNQPYY…IKTFKLLTNK (143 aa)).

As to quaternary structure, the capsid protein forms a homotrimer, from which the VLPs are assembled. The protease is a homodimer, whose active site consists of two apposed aspartic acid residues. In terms of processing, initially, virus-like particles (VLPs) are composed of the structural unprocessed proteins Gag and Gag-Pol, and also contain the host initiator methionine tRNA (tRNA(i)-Met) which serves as a primer for minus-strand DNA synthesis, and a dimer of genomic Ty RNA. Processing of the polyproteins occurs within the particle and proceeds by an ordered pathway, called maturation. First, the protease (PR) is released by autocatalytic cleavage of the Gag-Pol polyprotein, and this cleavage is a prerequisite for subsequent processing at the remaining sites to release the mature structural and catalytic proteins. Maturation takes place prior to the RT reaction and is required to produce transposition-competent VLPs.

The protein resides in the cytoplasm. The protein localises to the nucleus. The catalysed reaction is DNA(n) + a 2'-deoxyribonucleoside 5'-triphosphate = DNA(n+1) + diphosphate. It carries out the reaction Endonucleolytic cleavage to 5'-phosphomonoester.. Capsid protein (CA) is the structural component of the virus-like particle (VLP), forming the shell that encapsulates the retrotransposons dimeric RNA genome. The particles are assembled from trimer-clustered units and there are holes in the capsid shells that allow for the diffusion of macromolecules. CA also has nucleocapsid-like chaperone activity, promoting primer tRNA(i)-Met annealing to the multipartite primer-binding site (PBS), dimerization of Ty2 RNA and initiation of reverse transcription. In terms of biological role, the aspartyl protease (PR) mediates the proteolytic cleavages of the Gag and Gag-Pol polyproteins after assembly of the VLP. Functionally, reverse transcriptase/ribonuclease H (RT) is a multifunctional enzyme that catalyzes the conversion of the retro-elements RNA genome into dsDNA within the VLP. The enzyme displays a DNA polymerase activity that can copy either DNA or RNA templates, and a ribonuclease H (RNase H) activity that cleaves the RNA strand of RNA-DNA heteroduplexes during plus-strand synthesis and hydrolyzes RNA primers. The conversion leads to a linear dsDNA copy of the retrotransposon that includes long terminal repeats (LTRs) at both ends. Its function is as follows. Integrase (IN) targets the VLP to the nucleus, where a subparticle preintegration complex (PIC) containing at least integrase and the newly synthesized dsDNA copy of the retrotransposon must transit the nuclear membrane. Once in the nucleus, integrase performs the integration of the dsDNA into the host genome. The chain is Transposon Ty2-GR1 Gag-Pol polyprotein (TY2B-GR1) from Saccharomyces cerevisiae (strain ATCC 204508 / S288c) (Baker's yeast).